The sequence spans 99 residues: C-C motif chemokine 17 (99 aa).

Positions 1-23 (MIPLKMLLLVTLLLGASLQVTHA) are cleaved as a signal peptide. Cystine bridges form between Cys33/Cys57 and Cys34/Cys73.

It belongs to the intercrine beta (chemokine CC) family. As to expression, expressed in thymus, spleen, lymph node, lung and heart.

It is found in the secreted. Chemokine, which displays chemotactic activity for T lymphocytes, preferentially Th2 cells, but not monocytes or granulocytes. Therefore plays an important role in a wide range of inflammatory and immunological processes. Acts by binding to CCR4 at T-cell surface. Mediates GM-CSF/CSF2-driven pain and inflammation. In the brain, required to maintain the typical, highly branched morphology of hippocampal microglia under homeostatic conditions. May be important for the appropriate adaptation of microglial morphology and synaptic plasticity to acute lipopolysaccharide (LPS)-induced neuroinflammation. Plays a role in wound healing, mainly by inducing fibroblast migration into the wound. This chain is C-C motif chemokine 17 (CCL17), found in Canis lupus familiaris (Dog).